Reading from the N-terminus, the 98-residue chain is Protein S100-A11 (98 aa).

A Phosphothreonine modification is found at T5. EF-hand domains lie at C8–A44 and K50–A85. Residue K22 is modified to N6-acetyllysine. Ca(2+)-binding residues include N26, Q28, E33, D63, N65, D67, Q69, and E74.

Belongs to the S-100 family. In terms of assembly, homodimer; disulfide-linked. Phosphorylation at Thr-5 significantly suppresses homodimerization and promotes association with NCL/nucleolin which induces nuclear translocation.

The protein resides in the cytoplasm. It is found in the nucleus. Its function is as follows. Facilitates the differentiation and the cornification of keratinocytes. The protein is Protein S100-A11 (S100a11) of Mus musculus (Mouse).